The sequence spans 687 residues: DNA-directed RNA polymerase subunit beta' (687 aa).

Zn(2+) contacts are provided by Cys-69, Cys-71, Cys-87, and Cys-90. Residues Asp-492, Asp-494, and Asp-496 each contribute to the Mg(2+) site.

It belongs to the RNA polymerase beta' chain family. RpoC1 subfamily. In plastids the minimal PEP RNA polymerase catalytic core is composed of four subunits: alpha, beta, beta', and beta''. When a (nuclear-encoded) sigma factor is associated with the core the holoenzyme is formed, which can initiate transcription. Requires Mg(2+) as cofactor. The cofactor is Zn(2+).

The protein resides in the plastid. It localises to the chloroplast. The enzyme catalyses RNA(n) + a ribonucleoside 5'-triphosphate = RNA(n+1) + diphosphate. DNA-dependent RNA polymerase catalyzes the transcription of DNA into RNA using the four ribonucleoside triphosphates as substrates. The polypeptide is DNA-directed RNA polymerase subunit beta' (Silene latifolia (White campion)).